The primary structure comprises 2474 residues: Polyprotein P1234 (2474 aa).

The 232-residue stretch at 28–259 folds into the Alphavirus-like MT domain; it reads EPRQVTPNDH…ESRKLLKSWH (232 aa). Catalysis depends on His-37, which acts as the For mRNA-capping enzyme nsP1 activity. Zn(2+) is bound by residues His-79, Glu-129, Cys-134, and Cys-141. The tract at residues 295–450 is membrane-binding and oligomerization; the sequence is GLYGKTTGYA…QKVQAEFDSF (156 aa). S-palmitoyl cysteine; by host attachment occurs at residues Cys-417 and Cys-419. Residues 482–502 form a disordered region; sequence PYSGDAQEARDAEKEAEEERE. The region spanning 690–842 is the (+)RNA virus helicase ATP-binding domain; that stretch reads DLTNPPYHEF…HNICTQVYHK (153 aa). 721–728 serves as a coordination point for a ribonucleoside 5'-triphosphate; it reads GVPGSGKS. One can recognise a (+)RNA virus helicase C-terminal domain in the interval 843 to 991; sequence SISRRCTLPV…IKEWEVEHAS (149 aa). The region spanning 1004 to 1327 is the Peptidase C9 domain; sequence DTFQNKANVC…NQLNAAFVGQ (324 aa). The nucleolus localization signal stretch occupies residues 1005–1024; that stretch reads TFQNKANVCWAKSLVPILET. The For cysteine protease nsP2 activity role is filled by Cys-1013. The short motif at 1058 to 1067 is the Nuclear export signal element; the sequence is TRMYGVDLDS. The active-site For cysteine protease nsP2 activity is the His-1083. Residues 1182-1186 carry the Nuclear localization signal motif; that stretch reads PTKRV. A Macro domain is found at 1334 to 1493; the sequence is APSYRVKRMD…KISEAIQMRT (160 aa). ADP-D-ribose contacts are provided by Asp-1343, Asn-1357, Gly-1365, Gly-1445, Val-1446, and Tyr-1447. Zn(2+) is bound by residues Cys-1595, Cys-1597, Cys-1620, and Cys-1638. The tract at residues 1651 to 1672 is disordered; that stretch reads RVSPREYRPSQESVQEASTTTS. The interval 1659–1857 is HVD; the sequence is PSQESVQEAS…TCSDTDDELR (199 aa). Residues 1660–1672 show a composition bias toward polar residues; that stretch reads SQESVQEASTTTS. 2 interaction with host CD2AP regions span residues 1726–1739 and 1756–1767; these read VMST…RRRR and PMASVRFFRAEL. An interaction with host FHL1 region spans residues 1745-1793; the sequence is VTCDEREGNITPMASVRFFRAELCPVVQETAETRDTAMSLQAPPSTATE. The FGDF; binding to host G3BP1 signature appears at 1812-1815; that stretch reads FGDF. The interaction with host CD2AP stretch occupies residues 1820-1828; sequence IESLSSELL. Residues 1830 to 1833 carry the FGDF; binding to host G3BP1 motif; the sequence is FGDF. The 116-residue stretch at 2228 to 2343 folds into the RdRp catalytic domain; sequence DTVLETDIAS…HGVVSDELMA (116 aa).

As to quaternary structure, homododecamer. The enzyme forms a membrane-associated dodecameric ring with a central channel for the exchange of between the viral replication factories and the host cytoplasm. Interacts with non-structural protein 3. Interacts with RNA-directed RNA polymerase nsP4. Interacts with protease nsP2. Interacts with itself. Interacts with host STING1; this interaction results in inhibition of cGAS-STING signaling and increased levels of palmitoylation and protein stabilization of nsP1. Interacts with host TMEM45B; this interaction leads to viral replication inhibition. In terms of assembly, interacts with mRNA-capping enzyme nsP1. Interacts (via C-terminus) with host G3BP1; this interaction inhibits the formation of host stress granules on viral mRNAs and the nsp3-G3BP1 complexes bind viral RNAs and probably orchestrate the assembly of viral replication complexes. Interacts (via C-terminus) with host G3BP2; this interaction inhibits the formation of host stress granules on viral mRNAs and the nsp3-G3BP2 complexes bind viral RNAs and probably orchestrate the assembly of viral replication complexes. Interacts (via C-terminus) with host NAP1L1. Interacts (via C-terminus) with host NAP1L4. Interacts (via C-terminus) with host DHX9; this interaction allows the recruitment of DHX9 to the plasma membrane, where it associates with viral replication complexes and may play a role in the translation-to-replication switch. Interacts (via C-terminus) with host FHL1 (via LIM domain 1); this interaction is required for viral RNA replication. Interacts (via C-terminus) with host CD2AP; this interaction plays a role in initiation of viral replication. Interacts (via C-terminus) with host SH3KBP1; this interaction plays a role in initiation of viral replication. Interacts with mRNA-capping enzyme nsP1. Interacts with protease nsP2. interacts with itself. Interacts with host TMEM45B; this interaction leads to viral replication inhibition. As to quaternary structure, interacts with RNA-directed RNA polymerase nsP4. Interacts with mRNA-capping enzyme nsP1. Interacts with KPNA1/karyopherin-alpha1; this interaction probably allows the active transport of protease nsP2 into the host nucleus. Requires Mg(2+) as cofactor. Mn(2+) is required as a cofactor. Specific enzymatic cleavages in vivo yield mature proteins. The processing of the polyprotein is temporally regulated. In early stages (1.7 hpi), P1234 is first cleaved in trans through its nsP2 protease activity, releasing P123 and nsP4, which associate to form the early replication complex. At the same time, P1234 is also cut at the nsP1/nsP2 site early in infection but with lower efficiency. After replication of the viral minus-strand RNAs (4 hpi), the polyproteins are cut at the nsP1/nsP2 and nsP2/nsP3 sites very efficiently, preventing accumulation of P123 and P1234 and allowing the formation of the late replication complex. NsP3/nsP4 site is not cleaved anymore and P34 is produced rather than nsP4. In terms of processing, specific enzymatic cleavages in vivo yield mature proteins. The processing of the polyprotein is temporally regulated. In early stages (1.7 hpi), P123 is cleaved at the nsP1/nsP2 site with low efficiency. After replication of the viral minus-strand RNAs (4 hpi), the polyproteins are cut at the nsP1/nsP2 and nsP2/nsP3 sites very efficiently, preventing accumulation of P123 and allowing the formation of the late replication complex. Post-translationally, palmitoylated by host palmitoyltransferases ZDHHC2 and ZDHHC19. Palmitoylation is increased by the interacton with host STING1. Phosphorylated by host on serines and threonines. In terms of processing, ubiquitinated; targets the protein for rapid degradation via the ubiquitin system. Nsp4 is present in extremely low quantities due to low frequency of translation through the amber stop-codon and the degradation by the ubiquitin pathway.

It localises to the host cytoplasmic vesicle membrane. Its subcellular location is the host cell membrane. The protein localises to the host cell projection. The protein resides in the host filopodium. It is found in the host nucleus. It localises to the host cytoplasm. It catalyses the reaction GTP + S-adenosyl-L-methionine = N(7)-methyl-GTP + S-adenosyl-L-homocysteine. It carries out the reaction N(7)-methyl-GTP + L-histidyl-[protein] = N(tele)-(N(7)-methylguanosine 5'-phospho)-L-histidyl-[protein] + diphosphate. The catalysed reaction is N(tele)-(N(7)-methylguanosine 5'-phospho)-L-histidyl-[protein] + a 5'-end diphospho-(purine-ribonucleoside) in mRNA + H(+) = a 5'-end (N(7)-methyl 5'-triphosphoguanosine)-(purine-ribonucleoside) in mRNA + L-histidyl-[protein]. The enzyme catalyses a 5'-end triphospho-ribonucleoside in mRNA + H2O = a 5'-end diphospho-ribonucleoside in mRNA + phosphate + H(+). It catalyses the reaction a ribonucleoside 5'-triphosphate + H2O = a ribonucleoside 5'-diphosphate + phosphate + H(+). It carries out the reaction ATP + H2O = ADP + phosphate + H(+). The catalysed reaction is RNA(n) + a ribonucleoside 5'-triphosphate = RNA(n+1) + diphosphate. The enzyme catalyses 4-O-(ADP-D-ribosyl)-L-aspartyl-[protein] + H2O = L-aspartyl-[protein] + ADP-D-ribose + H(+). It catalyses the reaction 5-O-(ADP-D-ribosyl)-L-glutamyl-[protein] + H2O = L-glutamyl-[protein] + ADP-D-ribose + H(+). It carries out the reaction RNA(n) + ATP = RNA(n)-3'-adenine ribonucleotide + diphosphate. The catalysed reaction is ADP-alpha-D-ribose 1''-phosphate + H2O = ADP-D-ribose + phosphate. In terms of biological role, inactive precursor of the viral replicase, which is activated by cleavages carried out by the viral protease nsP2. The early replication complex formed by the polyprotein P123 and nsP4 synthesizes minus-strand RNAs. As soon P123 is cleaved into mature proteins, the plus-strand RNAs synthesis begins. Functionally, cytoplasmic capping enzyme that catalyzes two virus-specific reactions: methyltransferase and guanylyltransferase. mRNA-capping is necessary since all viral RNAs are synthesized in the cytoplasm, and host capping enzymes are restricted to the nucleus. The enzymatic reaction involves a covalent link between 7-methyl-GMP and nsP1, whereas eukaryotic capping enzymes form a covalent complex only with GMP. nsP1 capping consists in the following reactions: GTP is first methylated into 7-methyl-GMP and then is covalently linked to nsP1 to form the m7GMp-nsP1 complex from which 7-methyl-GMP complex is transferred to the mRNA to create the cap structure. NsP1 is also needed for the initiation of the minus-strand RNAs synthesis. At the initiation of virus replication, mediates the assembly of the viral replication complex made of the non-structural proteins, the association of this complex with the inner face of the plasma membrane and the formation of membranous spherules that serve as replication complex factories. Forms the neck of these spherules with a central channel for mediating communication and the passage of RNA, nucleotides, and small proteins between the viral replication complex and the host cytoplasm. Palmitoylated nsP1 is remodeling host cell cytoskeleton, and induces filopodium-like structure formation at the surface of the host cell. Its function is as follows. Multifunctional protein whose N-terminus is part of the RNA polymerase complex and displays NTPase, RNA triphosphatase and helicase activities. NTPase and RNA triphosphatase are involved in viral RNA capping and helicase keeps a check on the dsRNA replication intermediates. The C-terminus harbors a protease that specifically cleaves the polyproteins and releases the mature proteins. Required for the shutoff of minus-strand RNAs synthesis. Specifically inhibits the host IFN response by promoting the nuclear export of host STAT1. Also inhibits host transcription by inducing the rapid proteasome-dependent degradation of POLR2A, a catalytic subunit of the RNAPII complex. The resulting inhibition of cellular protein synthesis serves to ensure maximal viral gene expression and to evade host immune response. In terms of biological role, seems to be essential for minus-strand RNAs and subgenomic 26S mRNAs synthesis. Displays mono-ADP-ribosylhydrolase activity. ADP-ribosylation is a post-translational modification that controls various processes of the host cell and the virus probably needs to revert it for optimal viral replication. Binds proteins of G3BP family and sequesters them into the viral RNA replication complexes thereby inhibiting the formation of host stress granules on viral mRNAs. The nsp3-G3BP complexes bind viral RNAs and probably orchestrate the assembly of viral replication complexes, thanks to the ability of G3BP family members to self-assemble and bind DNA. RNA dependent RNA polymerase. Replicates genomic and antigenomic RNA by recognizing replications specific signals. The early replication complex formed by the polyprotein P123 and nsP4 synthesizes minus-strand RNAs. The late replication complex composed of fully processed nsP1-nsP4 is responsible for the production of genomic and subgenomic plus-strand RNAs. This Chikungunya virus (strain S27-African prototype) (CHIKV) protein is Polyprotein P1234.